Consider the following 265-residue polypeptide: Elongation factor 1-delta (265 aa).

The segment covering 31–54 (MGSASNKPHNSPQSAASALSNSGD) has biased composition (polar residues). 2 disordered regions span residues 31-64 (MGSA…RVAN) and 118-155 (KVQV…DAEA). Positions 130–153 (GTGEDDDDDDDIDLFGSDNEEEDA) are enriched in acidic residues.

This sequence belongs to the EF-1-beta/EF-1-delta family. As to quaternary structure, EF-1 is composed of 4 subunits: alpha, beta, delta, and gamma.

Functionally, EF-1-beta and EF-1-delta stimulate the exchange of GDP bound to EF-1-alpha to GTP. The chain is Elongation factor 1-delta (eef1d) from Xenopus laevis (African clawed frog).